A 200-amino-acid chain; its full sequence is MELQVVGANALTVSETTFGREFNEALIHQVVVAYAAGARQGSRAQKTRAEVSGSGKKPWRQKGTGRARSGDIKSPIWRSGGITFAAKPQDHSQKVNKKMYRGAIKSILSELVRQERLVVVEKFEIEAPKTKVLVQKLKDLALNDALIITANLDENLFLAARNLYKVDVRDVQGIDPVSLIAFDKVVITADAVKQIEEMLA.

The interval 43–71 (RAQKTRAEVSGSGKKPWRQKGTGRARSGD) is disordered.

This sequence belongs to the universal ribosomal protein uL4 family. Part of the 50S ribosomal subunit.

Functionally, one of the primary rRNA binding proteins, this protein initially binds near the 5'-end of the 23S rRNA. It is important during the early stages of 50S assembly. It makes multiple contacts with different domains of the 23S rRNA in the assembled 50S subunit and ribosome. Its function is as follows. Forms part of the polypeptide exit tunnel. The polypeptide is Large ribosomal subunit protein uL4 (Actinobacillus pleuropneumoniae serotype 5b (strain L20)).